The primary structure comprises 359 residues: Adenosine deaminase (359 aa).

Zn(2+) contacts are provided by H15 and H17. Substrate-binding residues include H17, D19, and G184. H213 contacts Zn(2+). Residue E216 is the Proton donor of the active site. D295 is a binding site for Zn(2+). D296 contacts substrate.

It belongs to the metallo-dependent hydrolases superfamily. Adenosine and AMP deaminases family. It depends on Zn(2+) as a cofactor.

The protein resides in the cell membrane. It localises to the cell junction. Its subcellular location is the cytoplasmic vesicle lumen. The protein localises to the cytoplasm. It is found in the lysosome. The enzyme catalyses adenosine + H2O + H(+) = inosine + NH4(+). The catalysed reaction is 2'-deoxyadenosine + H2O + H(+) = 2'-deoxyinosine + NH4(+). In terms of biological role, catalyzes the hydrolytic deamination of adenosine and 2-deoxyadenosine. Plays an important role in purine metabolism and in adenosine homeostasis. Modulates signaling by extracellular adenosine, and so contributes indirectly to cellular signaling events. May act as a positive regulator of T-cell coactivation. The protein is Adenosine deaminase (ada) of Danio rerio (Zebrafish).